The primary structure comprises 157 residues: Transcription elongation factor GreA (157 aa).

Belongs to the GreA/GreB family.

Its function is as follows. Necessary for efficient RNA polymerase transcription elongation past template-encoded arresting sites. The arresting sites in DNA have the property of trapping a certain fraction of elongating RNA polymerases that pass through, resulting in locked ternary complexes. Cleavage of the nascent transcript by cleavage factors such as GreA or GreB allows the resumption of elongation from the new 3'terminus. GreA releases sequences of 2 to 3 nucleotides. In Caulobacter vibrioides (strain ATCC 19089 / CIP 103742 / CB 15) (Caulobacter crescentus), this protein is Transcription elongation factor GreA.